The chain runs to 339 residues: Glycerol-3-phosphate dehydrogenase [NAD(P)+] (339 aa).

NADPH-binding residues include serine 15, tyrosine 16, histidine 36, and lysine 110. Sn-glycerol 3-phosphate-binding residues include lysine 110, glycine 139, and threonine 141. Position 143 (alanine 143) interacts with NADPH. Residues lysine 195, aspartate 248, serine 258, arginine 259, and asparagine 260 each coordinate sn-glycerol 3-phosphate. Residue lysine 195 is the Proton acceptor of the active site. Arginine 259 is a binding site for NADPH. 2 residues coordinate NADPH: valine 283 and glutamate 285.

Belongs to the NAD-dependent glycerol-3-phosphate dehydrogenase family.

It is found in the cytoplasm. The enzyme catalyses sn-glycerol 3-phosphate + NAD(+) = dihydroxyacetone phosphate + NADH + H(+). It carries out the reaction sn-glycerol 3-phosphate + NADP(+) = dihydroxyacetone phosphate + NADPH + H(+). It participates in membrane lipid metabolism; glycerophospholipid metabolism. Catalyzes the reduction of the glycolytic intermediate dihydroxyacetone phosphate (DHAP) to sn-glycerol 3-phosphate (G3P), the key precursor for phospholipid synthesis. In Pectobacterium carotovorum subsp. carotovorum (strain PC1), this protein is Glycerol-3-phosphate dehydrogenase [NAD(P)+].